The following is a 92-amino-acid chain: Small ribosomal subunit protein uS19c (92 aa).

It belongs to the universal ribosomal protein uS19 family.

It localises to the plastid. It is found in the chloroplast. Protein S19 forms a complex with S13 that binds strongly to the 16S ribosomal RNA. This chain is Small ribosomal subunit protein uS19c, found in Ceratophyllum demersum (Rigid hornwort).